The sequence spans 178 residues: Protein GrpE (178 aa).

Residues 1 to 11 are compositionally biased toward basic and acidic residues; it reads MAEDQAPREET. The interval 1 to 30 is disordered; it reads MAEDQAPREETVEAPELTEAPEIDELETLR.

This sequence belongs to the GrpE family. Homodimer.

The protein resides in the cytoplasm. Functionally, participates actively in the response to hyperosmotic and heat shock by preventing the aggregation of stress-denatured proteins, in association with DnaK and GrpE. It is the nucleotide exchange factor for DnaK and may function as a thermosensor. Unfolded proteins bind initially to DnaJ; upon interaction with the DnaJ-bound protein, DnaK hydrolyzes its bound ATP, resulting in the formation of a stable complex. GrpE releases ADP from DnaK; ATP binding to DnaK triggers the release of the substrate protein, thus completing the reaction cycle. Several rounds of ATP-dependent interactions between DnaJ, DnaK and GrpE are required for fully efficient folding. This is Protein GrpE from Cereibacter sphaeroides (strain ATCC 17023 / DSM 158 / JCM 6121 / CCUG 31486 / LMG 2827 / NBRC 12203 / NCIMB 8253 / ATH 2.4.1.) (Rhodobacter sphaeroides).